The chain runs to 240 residues: UDP-2,3-diacylglucosamine hydrolase (240 aa).

5 residues coordinate Mn(2+): Asp8, His10, Asp41, Asn79, and His114. Residue 79-80 (NR) participates in substrate binding. 5 residues coordinate substrate: Asp122, Ser160, Asn164, Lys167, and His195. Residues His195 and His197 each contribute to the Mn(2+) site.

Belongs to the LpxH family. It depends on Mn(2+) as a cofactor.

Its subcellular location is the cell inner membrane. The catalysed reaction is UDP-2-N,3-O-bis[(3R)-3-hydroxytetradecanoyl]-alpha-D-glucosamine + H2O = 2-N,3-O-bis[(3R)-3-hydroxytetradecanoyl]-alpha-D-glucosaminyl 1-phosphate + UMP + 2 H(+). The protein operates within glycolipid biosynthesis; lipid IV(A) biosynthesis; lipid IV(A) from (3R)-3-hydroxytetradecanoyl-[acyl-carrier-protein] and UDP-N-acetyl-alpha-D-glucosamine: step 4/6. Its function is as follows. Hydrolyzes the pyrophosphate bond of UDP-2,3-diacylglucosamine to yield 2,3-diacylglucosamine 1-phosphate (lipid X) and UMP by catalyzing the attack of water at the alpha-P atom. Involved in the biosynthesis of lipid A, a phosphorylated glycolipid that anchors the lipopolysaccharide to the outer membrane of the cell. The polypeptide is UDP-2,3-diacylglucosamine hydrolase (Escherichia coli O7:K1 (strain IAI39 / ExPEC)).